A 321-amino-acid chain; its full sequence is Glucokinase (321 aa).

Gly8–Thr13 is an ATP binding site.

The protein belongs to the bacterial glucokinase family.

The protein localises to the cytoplasm. The enzyme catalyses D-glucose + ATP = D-glucose 6-phosphate + ADP + H(+). The polypeptide is Glucokinase (Cronobacter sakazakii (strain ATCC BAA-894) (Enterobacter sakazakii)).